The following is a 306-amino-acid chain: Choline-binding protein (306 aa).

The N-terminal stretch at 1-22 (MKRKYLKLMIGLALAATLTLSG) is a signal peptide. The N-palmitoyl cysteine moiety is linked to residue Cys23. The S-diacylglycerol cysteine moiety is linked to residue Cys23.

This sequence belongs to the OsmX family.

It localises to the cell membrane. Functionally, member of a high affinity multicomponent binding-protein-dependent transport system for choline. This is Choline-binding protein (opuBC) from Bacillus subtilis (strain 168).